The following is a 744-amino-acid chain: MEYTHQSSWIIPFIPLPVPILIGVGLLFFPTATKNIRRMWVFPSIFLLTIVMIFSIDLSIHQINNSSIYQYVWSWTINNDLSLEFGYLIDSLTSIMSILITTVGILVLIYSDSYMSHDQSYLRFFTYLSFFNTSMLGLVTSSNLIQVYIFWELVGMCSYLLIGFWFTRPIAANACQKAFVTNRVGDFGLLLGILGFYWITGSLEFRDLFQIFNNLIYKNEVNIFFVTLCALLLFCGSVAKSAQFPLHVWLPDAMEGPTPISALIHAATMVAAGIFLVARLLPLFIVIPSIMSGIALIGIITVVLGATLAIAQKDIKKNLAYSTMSQLGYMILALGMGSYRAALFHLITHAYSKALLFLGSGSIIHSMEAIVGYSPDKSQNMVLMGGLTKHAPITKNAFLIGTLSLCGIPPFACFWSKDGILNDSWLYSPIFAIIACSTAGLTAFYMFRIYLLVFEGYLNVHFQHFNGKKNSSFYSISLWGKEEKKKLKKKIHLLALLTMNNNERTSFFQKRAYSHRINRNVKSIRRLFLDSTHFGIKNIGFFYPQESDNTMLFSMLVLVLFTFFVGSVGISFSQEGIDLDILSKLLIPSIDLLHQNSKNSVDWYEFFTNATFSVSIAFFGILIASFFYKPVFSSLQNLNLCNLFQKGLPKKIIADKIINIIYDWSYNRGYIDAFLEVSLIASVKKLAKFNYFFDRQIIDGIPNGVGISSFFMGEAIKYVGGGRISSYIFFFLLIFLVICYSIFI.

The next 16 helical transmembrane spans lie at 9 to 29 (WIIP…LLFF), 40 to 60 (WVFP…DLSI), 89 to 109 (IDSL…LVLI), 125 to 145 (FTYL…SNLI), 147 to 167 (VYIF…FWFT), 185 to 205 (GDFG…SLEF), 219 to 239 (NEVN…GSVA), 258 to 278 (TPIS…FLVA), 280 to 300 (LLPL…IGII), 327 to 347 (LGYM…FHLI), 354 to 374 (ALLF…VGYS), 396 to 416 (NAFL…CFWS), 425 to 445 (WLYS…TAFY), 552 to 572 (LFSM…GISF), 612 to 632 (FSVS…KPVF), and 724 to 744 (ISSY…SIFI).

Belongs to the complex I subunit 5 family. As to quaternary structure, NDH is composed of at least 16 different subunits, 5 of which are encoded in the nucleus.

The protein resides in the plastid. Its subcellular location is the chloroplast thylakoid membrane. It catalyses the reaction a plastoquinone + NADH + (n+1) H(+)(in) = a plastoquinol + NAD(+) + n H(+)(out). The catalysed reaction is a plastoquinone + NADPH + (n+1) H(+)(in) = a plastoquinol + NADP(+) + n H(+)(out). NDH shuttles electrons from NAD(P)H:plastoquinone, via FMN and iron-sulfur (Fe-S) centers, to quinones in the photosynthetic chain and possibly in a chloroplast respiratory chain. The immediate electron acceptor for the enzyme in this species is believed to be plastoquinone. Couples the redox reaction to proton translocation, and thus conserves the redox energy in a proton gradient. The sequence is that of NAD(P)H-quinone oxidoreductase subunit 5, chloroplastic (ndhF) from Cicer arietinum (Chickpea).